The sequence spans 319 residues: tRNA N6-adenosine threonylcarbamoyltransferase (319 aa).

Residues H110 and H114 each contribute to the Fe cation site. Residues V135–G139, D168, G181, D185, and N277 each bind substrate. A Fe cation-binding site is contributed by D301.

Belongs to the KAE1 / TsaD family. Fe(2+) is required as a cofactor.

The protein resides in the cytoplasm. It carries out the reaction L-threonylcarbamoyladenylate + adenosine(37) in tRNA = N(6)-L-threonylcarbamoyladenosine(37) in tRNA + AMP + H(+). Required for the formation of a threonylcarbamoyl group on adenosine at position 37 (t(6)A37) in tRNAs that read codons beginning with adenine. Is involved in the transfer of the threonylcarbamoyl moiety of threonylcarbamoyl-AMP (TC-AMP) to the N6 group of A37, together with TsaE and TsaB. TsaD likely plays a direct catalytic role in this reaction. The polypeptide is tRNA N6-adenosine threonylcarbamoyltransferase (Mycoplasma pneumoniae (strain ATCC 29342 / M129 / Subtype 1) (Mycoplasmoides pneumoniae)).